The chain runs to 261 residues: Maspardin (261 aa).

The 73-residue stretch at 87-159 folds into the AB hydrolase-1 domain; it reads FCDGFRKLLD…NSFWLMPAFM (73 aa). Ser-257 bears the Phosphoserine mark.

Belongs to the AB hydrolase superfamily. Interacts with CD4. Interacts with ALDH16A1.

It localises to the cytoplasm. In terms of biological role, may play a role as a negative regulatory factor in CD4-dependent T-cell activation. This chain is Maspardin (Spg21), found in Rattus norvegicus (Rat).